We begin with the raw amino-acid sequence, 456 residues long: Hydroxyproline dehydrogenase (456 aa).

Residues Lys-310 and Lys-320 each carry the N6-acetyllysine modification.

The protein belongs to the proline oxidase family. Requires FAD as cofactor.

It carries out the reaction trans-4-hydroxy-L-proline + a quinone = (3R,5S)-1-pyrroline-3-hydroxy-5-carboxylate + a quinol + H(+). The catalysed reaction is L-proline + a quinone = (S)-1-pyrroline-5-carboxylate + a quinol + H(+). Its function is as follows. Dehydrogenase that converts trans-4-L-hydroxyproline to delta-1-pyrroline-3-hydroxy-5-carboxylate (Hyp) using ubiquinone-10 as the terminal electron acceptor. Can also use proline as a substrate but with a very much lower efficiency. Does not react with other diastereomers of Hyp: trans-4-D-hydroxyproline and cis-4-L-hydroxyproline. Ubiquininone analogs such as menadione, duroquinone and ubiquinone-1 react more efficiently than oxygen as the terminal electron acceptor during catalysis. The chain is Hydroxyproline dehydrogenase from Rattus norvegicus (Rat).